Reading from the N-terminus, the 225-residue chain is Ribonuclease 3 (225 aa).

Residues 5-127 enclose the RNase III domain; it reads VTELYKTIDY…IIGAVFLDSD (123 aa). Residue Glu40 participates in Mg(2+) binding. Residue Asp44 is part of the active site. Residues Asp113 and Glu116 each contribute to the Mg(2+) site. Residue Glu116 is part of the active site. Residues 154–223 form the DRBM domain; the sequence is DPKTLLQEHL…AEKALKILKN (70 aa).

This sequence belongs to the ribonuclease III family. As to quaternary structure, homodimer. The cofactor is Mg(2+).

It is found in the cytoplasm. It carries out the reaction Endonucleolytic cleavage to 5'-phosphomonoester.. Functionally, digests double-stranded RNA. Involved in the processing of primary rRNA transcript to yield the immediate precursors to the large and small rRNAs (23S and 16S). Processes some mRNAs, and tRNAs when they are encoded in the rRNA operon. Processes pre-crRNA and tracrRNA of type II CRISPR loci if present in the organism. In Pseudoalteromonas translucida (strain TAC 125), this protein is Ribonuclease 3.